Reading from the N-terminus, the 434-residue chain is Calcium uptake protein 2, mitochondrial (434 aa).

Residues 1 to 22 constitute a mitochondrion transit peptide; the sequence is MAAAAGSCARVAAWGGKLRRGL. The EF-hand 1 domain maps to 172–207; the sequence is KPHSGFHVAFKMLDTDGNEMIEKREFFKLQKIISKQ. 6 residues coordinate Ca(2+): aspartate 185, aspartate 187, asparagine 189, methionine 191, glutamate 193, and glutamate 196. Serine 205 is subject to Phosphoserine. In terms of domain architecture, EF-hand 2; degenerate spans 227–262; that stretch reads EPEINTTLQMRFFGKRGQRKLHYKEFRRFMENLQTE. In terms of domain architecture, EF-hand 3; degenerate spans 293-328; the sequence is TENKDIYWKNVREKLSAGESISLDEFKSFCHFTTHL. Residues 362–397 enclose the EF-hand 4 domain; that stretch reads LSNNILDTVFKIFDLDGDECLSHEEFLGVLKNRMHR. 5 residues coordinate Ca(2+): aspartate 375, aspartate 377, aspartate 379, cysteine 381, and glutamate 386.

The protein belongs to the MICU1 family. MICU2 subfamily. As to quaternary structure, heterodimer; disulfide-linked; heterodimerizes with MICU1. Component of the uniplex complex, composed of MCU, EMRE/SMDT1, MICU1 and MICU2 in a 4:4:1:1 stoichiometry.

It is found in the mitochondrion intermembrane space. The protein localises to the mitochondrion inner membrane. Functionally, calcium sensor of the mitochondrial calcium uniporter (MCU) channel, which senses calcium level via its EF-hand domains. MICU1 and MICU2 form a disulfide-linked heterodimer that stimulates and inhibits MCU activity, depending on the concentration of calcium. At low calcium levels, MICU1 occludes the pore of the MCU channel, preventing mitochondrial calcium uptake. At higher calcium levels, calcium-binding to MICU1 and MICU2 induces a conformational change that weakens MCU-MICU1 interactions and moves the MICU1-MICU2 heterodimer away from the pore, allowing calcium permeation through the MCU channel. This Homo sapiens (Human) protein is Calcium uptake protein 2, mitochondrial.